The following is a 367-amino-acid chain: MSLSRVSVTAVRNLHPVTFSPSPRINILYGANGSGKTSVLEAIHLLGLARSFRSTRLLPVIQYEQLACTVFGQVELAEGGHSALGISRDRQGEFQIRIDGQNARSAAQLAEILPLQLINPDSFRLLEGAPKIRRQFLDWGVFHVEPRFMATWQRLQKALRQRNSWLRHGTLDAVSQAVWDRELCQASAEIDEYRRAYIKALKPVFEQTLSELVELEGLTLSYYRGWDKDRELSAVLAGSVQRDQQMGHTQAGPQRADLRLRLGAHNAADILSRGQQKLVVCALRIAQGHLVSQARRGQCIYLVDDLPSELDESHRRALCRLLEDLRCQVFITCVDHELLREGWQTETPVALFHVEQGRITQTHDHRE.

30–37 is a binding site for ATP; it reads GANGSGKT.

This sequence belongs to the RecF family.

Its subcellular location is the cytoplasm. In terms of biological role, the RecF protein is involved in DNA metabolism; it is required for DNA replication and normal SOS inducibility. RecF binds preferentially to single-stranded, linear DNA. It also seems to bind ATP. This is DNA replication and repair protein RecF from Pseudomonas fluorescens (strain Pf0-1).